The chain runs to 1166 residues: UDP-N-acetylglucosamine transferase subunit ALG13 (1166 aa).

Positions 1–125 (MKRAFVTVGT…LHKEGHLFYC (125 aa)) are glycosyltransferase activity. The interval 126 to 394 (TCRVLSCPAP…GSRRNKHHAL (269 aa)) is deubiquitinase activity. The OTU domain maps to 225–346 (LFRKVVAKDA…NGHYDSVYSK (122 aa)). Residue D233 is the For deubiquitinase activity of the active site. The active-site Nucleophile; for deubiquitinase activity is C236. H339 serves as the catalytic For deubiquitinase activity. The tract at residues 393–438 (ALTASVEGSSDQKSSTEDRTEEAAACSSAASTPEGNKQGTERQKVP) is disordered. A Tudor domain is found at 486-546 (YYFLGDKCQV…RPVNQVALLP (61 aa)). Composition is skewed to pro residues over residues 921–930 (PPPLPPPPPA), 941–957 (PLPP…PPYS), and 1004–1034 (QPQP…PPPQ). 2 disordered regions span residues 921-966 (PPPL…SDLP) and 998-1056 (QQQL…EQPL).

Belongs to the glycosyltransferase 28 family. Forms with ALG14 the active heterodimeric UDP-N-acetylglucosamine transferase complex. In terms of assembly, not able to interact with ALG14 to form an active UDP-N-acetylglucosamine transferase complex.

Its subcellular location is the endoplasmic reticulum membrane. The catalysed reaction is an N-acetyl-alpha-D-glucosaminyl-diphospho-di-trans,poly-cis-dolichol + UDP-N-acetyl-alpha-D-glucosamine = an N,N'-diacetylchitobiosyl-diphospho-di-trans,poly-cis-dolichol + UDP + H(+). The protein operates within protein modification; protein glycosylation. In terms of biological role, catalytic subunit of the UDP-N-acetylglucosamine transferase complex that operates in the biosynthetic pathway of dolichol-linked oligosaccharides, the glycan precursors employed in protein asparagine (N)-glycosylation. The assembly of dolichol-linked oligosaccharides begins on the cytosolic side of the endoplasmic reticulum membrane and finishes in its lumen. The sequential addition of sugars to dolichol pyrophosphate produces dolichol-linked oligosaccharides containing fourteen sugars, including two GlcNAcs, nine mannoses and three glucoses. Once assembled, the oligosaccharide is transferred from the lipid to nascent proteins by oligosaccharyltransferases. On the cytoplasmic face of the endoplasmic reticulum, the dimeric ALG13/ALG14 complex catalyzes the second step of dolichol pyrophosphate biosynthesis, transferring a beta1,4-linked N-acetylglucosamine (GlcNAc) from UDP-GlcNAc to GlcNAc-pyrophosphatedolichol (Gn-PDol) to produce N,N'-diacetylchitobiosyl diphosphodolichol. N,N'-diacetylchitobiosyl diphosphodolichol is a substrate for ALG1, the following enzyme in the biosynthetic pathway. No glycosyltransferase or deubiquitinase activity is detected for this potential multifunctional enzyme. The protein is UDP-N-acetylglucosamine transferase subunit ALG13 of Mus musculus (Mouse).